A 386-amino-acid polypeptide reads, in one-letter code: Protein phosphatase methylesterase 1 (386 aa).

The disordered stretch occupies residues 1–38 (MSALEKSMHLGRLPSRPPLPGSGGSQSGAKMRMGPGRK). Residue S15 is modified to Phosphoserine. Residue R16 is modified to Asymmetric dimethylarginine; alternate. Omega-N-methylarginine; alternate is present on R16. S42 is modified (phosphoserine). Catalysis depends on residues S156 and D181. Residues 254–265 (IIEEEEEDEEGS) are compositionally biased toward acidic residues. The segment at 254–280 (IIEEEEEDEEGSESISKRKKEDDMETK) is disordered. Positions 268–280 (ISKRKKEDDMETK) are enriched in basic and acidic residues. H349 is an active-site residue.

The protein belongs to the AB hydrolase superfamily. In terms of assembly, binds PPP2CA and PPP2CB. Post-translationally, phosphorylated by SIK1 following increases in intracellular sodium, leading to dissociation from the protein phosphatase 2A (PP2A) complex and subsequent dephosphorylation of sodium/potassium-transporting ATPase ATP1A1.

The catalysed reaction is [phosphatase 2A protein]-C-terminal L-leucine methyl ester + H2O = [phosphatase 2A protein]-C-terminal L-leucine + methanol + H(+). In terms of biological role, demethylates proteins that have been reversibly carboxymethylated. Demethylates PPP2CB (in vitro) and PPP2CA. Binding to PPP2CA displaces the manganese ion and inactivates the enzyme. This is Protein phosphatase methylesterase 1 (PPME1) from Homo sapiens (Human).